Reading from the N-terminus, the 58-residue chain is 6.4 kDa protein (58 aa).

The sequence is that of 6.4 kDa protein from Pseudomonas phage Pf3 (Bacteriophage Pf3).